The chain runs to 124 residues: MPTINQLIRLGRERKVEKPKAPALQGNPQKRGVCVRVTTMTPKKPNSALRKIARVRLSNGIEVTAYIPGIGHNLQEHSVVLVRGGRVKDLPGIRYKIIRGTLDTAGVENRKQSRSKYGAKRPKK.

Residue Asp-89 is modified to 3-methylthioaspartic acid. A disordered region spans residues 104–124 (TAGVENRKQSRSKYGAKRPKK). Over residues 112 to 124 (QSRSKYGAKRPKK) the composition is skewed to basic residues.

This sequence belongs to the universal ribosomal protein uS12 family. Part of the 30S ribosomal subunit. Contacts proteins S8 and S17. May interact with IF1 in the 30S initiation complex.

In terms of biological role, with S4 and S5 plays an important role in translational accuracy. Its function is as follows. Interacts with and stabilizes bases of the 16S rRNA that are involved in tRNA selection in the A site and with the mRNA backbone. Located at the interface of the 30S and 50S subunits, it traverses the body of the 30S subunit contacting proteins on the other side and probably holding the rRNA structure together. The combined cluster of proteins S8, S12 and S17 appears to hold together the shoulder and platform of the 30S subunit. This chain is Small ribosomal subunit protein uS12, found in Pseudothermotoga lettingae (strain ATCC BAA-301 / DSM 14385 / NBRC 107922 / TMO) (Thermotoga lettingae).